Consider the following 297-residue polypeptide: MNIAIRNPVVARKEEGSLQVALDPDLKIETAKVFAVYGKGGIGKSTTSSNLSVAFSKLGKRVLQIGCDPKHDSTFTLTKRLAPTVIDALEAVNFHSEELRVEDFVVEGYNGVMCVEAGGPPAGTGCGGYVVGQTVKLLKEHHLLEDTDVVVFDVLGDVVCGGFASPLQHADRALIVTANDFDSIFAMNRIVAAIHAKSKNYGVRLGGVIANRSAKTDEIDRFNDAVGLKRLAHFPDLDVVRRSRLKKSTLFEMESSPELDAVTAEYMRLAETLWAGAEPCEAQPMKDRDLFEFLGFD.

ATP-binding positions include 41-46 (GIGKST) and lysine 70. A Mg(2+)-binding site is contributed by serine 45. The [4Fe-4S] cluster site is built by cysteine 126 and cysteine 160. Residues 211 to 212 (NR) and 235 to 237 (PDL) contribute to the ATP site.

It belongs to the NifH/BchL/ChlL family. As to quaternary structure, homodimer. Protochlorophyllide reductase is composed of three subunits; BchL, BchN and BchB. The cofactor is [4Fe-4S] cluster.

It carries out the reaction chlorophyllide a + oxidized 2[4Fe-4S]-[ferredoxin] + 2 ADP + 2 phosphate = protochlorophyllide a + reduced 2[4Fe-4S]-[ferredoxin] + 2 ATP + 2 H2O. It participates in porphyrin-containing compound metabolism; bacteriochlorophyll biosynthesis (light-independent). Functionally, component of the dark-operative protochlorophyllide reductase (DPOR) that uses Mg-ATP and reduced ferredoxin to reduce ring D of protochlorophyllide (Pchlide) to form chlorophyllide a (Chlide). This reaction is light-independent. The L component serves as a unique electron donor to the NB-component of the complex, and binds Mg-ATP. In Methylobacterium radiotolerans (strain ATCC 27329 / DSM 1819 / JCM 2831 / NBRC 15690 / NCIMB 10815 / 0-1), this protein is Light-independent protochlorophyllide reductase iron-sulfur ATP-binding protein.